Here is a 239-residue protein sequence, read N- to C-terminus: TPR repeat-containing protein TP_0282 (239 aa).

The chain crosses the membrane as a helical span at residues 21-43 (LLVGVLVAILGGLGLSAGCLLVM). TPR repeat units lie at residues 112–145 (AYAQACVADIFFARKEWEKAQQAYVRAAYGARRS) and 149–182 (GVYYFNAASCADERGRFEEARELYQRSARVQDFP).

The protein resides in the cell membrane. The sequence is that of TPR repeat-containing protein TP_0282 from Treponema pallidum (strain Nichols).